Reading from the N-terminus, the 362-residue chain is Type-1 angiotensin II receptor A (362 aa).

Residues 1–26 (MSNASTVETSDVERIAVNCSKSGMHN) lie on the Extracellular side of the membrane. N-linked (GlcNAc...) asparagine glycans are attached at residues Asn-3 and Asn-18. Intrachain disulfides connect Cys-19-Cys-273 and Cys-102-Cys-181. A helical transmembrane segment spans residues 27-56 (YIFIAIPIIYSTIFVVGVFGNSMVVIVIYS). At 57 to 62 (YMKMKT) the chain is on the cytoplasmic side. Residues 63 to 90 (VASIFLMNLALSDLCFVITLPLWAAYTA) form a helical membrane-spanning segment. Residues 91–99 (MHYHWPFGN) lie on the Extracellular side of the membrane. A helical membrane pass occupies residues 100-126 (FLCKVASTAITLNLYTTVFLLTCLSID). The Cytoplasmic portion of the chain corresponds to 127-142 (RYSAIVHPMKSRIWRT). The helical transmembrane segment at 143–166 (AMVARLTCVGIWLVAFLASMPSII) threads the bilayer. At 167 to 191 (YRQIYLFHDTNQTVCAIVYDSGHIY) the chain is on the extracellular side. Arg-168 is an angiotensin II binding site. N-linked (GlcNAc...) asparagine glycosylation occurs at Asn-177. Angiotensin II contacts are provided by Tyr-185 and Lys-200. The chain crosses the membrane as a helical span at residues 192 to 217 (FMVGMSLAKNIVGFLIPFLIILTSYT). Topologically, residues 218 to 238 (LIGKTLKEVYRAQRARNDDIF) are cytoplasmic. Residues 239-267 (KMIVAVVLLFFFCWIPYQVFTFLDVLIQM) form a helical membrane-spanning segment. The Extracellular segment spans residues 268 to 277 (DVIQNCKMYD). The chain crosses the membrane as a helical span at residues 278–303 (IVDTGMPITICIAYFNSCLNPFLYGF). At 304 to 362 (FGKNFRKHFLQLIKYIPPKMRTHASVNTKSSLVSSSLSDTKRASKKIALQMTDNEEHCK) the chain is on the cytoplasmic side. Cys-361 carries S-palmitoyl cysteine lipidation.

Belongs to the G-protein coupled receptor 1 family. C-terminal Ser or Thr residues may be phosphorylated. In terms of tissue distribution, expressed in lung, liver, kidney, and spleen, with highest expression in the heart.

The protein localises to the cell membrane. Receptor for angiotensin II, a vasoconstricting peptide, which acts as a key regulator of blood pressure and sodium retention by the kidney. The activated receptor in turn couples to G-alpha proteins G(q) (GNAQ, GNA11, GNA14 or GNA15) and thus activates phospholipase C and increases the cytosolic Ca(2+) concentrations, which in turn triggers cellular responses such as stimulation of protein kinase C. The polypeptide is Type-1 angiotensin II receptor A (agtr1-a) (Xenopus laevis (African clawed frog)).